A 143-amino-acid chain; its full sequence is Large ribosomal subunit protein uL11 (143 aa).

It belongs to the universal ribosomal protein uL11 family. In terms of assembly, part of the ribosomal stalk of the 50S ribosomal subunit. Interacts with L10 and the large rRNA to form the base of the stalk. L10 forms an elongated spine to which L12 dimers bind in a sequential fashion forming a multimeric L10(L12)X complex. In terms of processing, one or more lysine residues are methylated.

Functionally, forms part of the ribosomal stalk which helps the ribosome interact with GTP-bound translation factors. The protein is Large ribosomal subunit protein uL11 of Bordetella pertussis (strain Tohama I / ATCC BAA-589 / NCTC 13251).